A 188-amino-acid chain; its full sequence is dCTP deaminase (188 aa).

109–114 (KSTYAR) is a binding site for dCTP. The active-site Proton donor/acceptor is E135. The dCTP site is built by Q154, Y168, and Q178.

This sequence belongs to the dCTP deaminase family. In terms of assembly, homotrimer.

It carries out the reaction dCTP + H2O + H(+) = dUTP + NH4(+). It participates in pyrimidine metabolism; dUMP biosynthesis; dUMP from dCTP (dUTP route): step 1/2. Functionally, catalyzes the deamination of dCTP to dUTP. This is dCTP deaminase from Helicobacter pylori (strain P12).